Reading from the N-terminus, the 518-residue chain is Glutamate--cysteine ligase (518 aa).

The protein belongs to the glutamate--cysteine ligase type 1 family. Type 1 subfamily.

The enzyme catalyses L-cysteine + L-glutamate + ATP = gamma-L-glutamyl-L-cysteine + ADP + phosphate + H(+). It functions in the pathway sulfur metabolism; glutathione biosynthesis; glutathione from L-cysteine and L-glutamate: step 1/2. This Buchnera aphidicola subsp. Acyrthosiphon pisum (strain APS) (Acyrthosiphon pisum symbiotic bacterium) protein is Glutamate--cysteine ligase (gshA).